The following is a 184-amino-acid chain: ATP synthase subunit b, chloroplastic (184 aa).

The chain crosses the membrane as a helical span at residues Leu27 to Leu49.

This sequence belongs to the ATPase B chain family. In terms of assembly, F-type ATPases have 2 components, F(1) - the catalytic core - and F(0) - the membrane proton channel. F(1) has five subunits: alpha(3), beta(3), gamma(1), delta(1), epsilon(1). F(0) has four main subunits: a(1), b(1), b'(1) and c(10-14). The alpha and beta chains form an alternating ring which encloses part of the gamma chain. F(1) is attached to F(0) by a central stalk formed by the gamma and epsilon chains, while a peripheral stalk is formed by the delta, b and b' chains.

The protein resides in the plastid. Its subcellular location is the chloroplast thylakoid membrane. In terms of biological role, f(1)F(0) ATP synthase produces ATP from ADP in the presence of a proton or sodium gradient. F-type ATPases consist of two structural domains, F(1) containing the extramembraneous catalytic core and F(0) containing the membrane proton channel, linked together by a central stalk and a peripheral stalk. During catalysis, ATP synthesis in the catalytic domain of F(1) is coupled via a rotary mechanism of the central stalk subunits to proton translocation. Component of the F(0) channel, it forms part of the peripheral stalk, linking F(1) to F(0). The protein is ATP synthase subunit b, chloroplastic of Eucalyptus globulus subsp. globulus (Tasmanian blue gum).